The primary structure comprises 309 residues: NAD kinase (309 aa).

The Proton acceptor role is filled by Asp89. NAD(+)-binding positions include 89–90, 163–164, His174, Arg191, Asp193, and 204–209; these read DG, NE, and TAYSLS.

Belongs to the NAD kinase family. A divalent metal cation serves as cofactor.

The protein resides in the cytoplasm. The catalysed reaction is NAD(+) + ATP = ADP + NADP(+) + H(+). Involved in the regulation of the intracellular balance of NAD and NADP, and is a key enzyme in the biosynthesis of NADP. Catalyzes specifically the phosphorylation on 2'-hydroxyl of the adenosine moiety of NAD to yield NADP. In Shewanella denitrificans (strain OS217 / ATCC BAA-1090 / DSM 15013), this protein is NAD kinase.